The following is a 705-amino-acid chain: Elongation factor G (705 aa).

The tr-type G domain maps to 6 to 282 (NKVRNIGIMA…AVVDFLPSPL (277 aa)). GTP contacts are provided by residues 15–22 (AHIDAGKT), 79–83 (DTPGH), and 133–136 (NKMD).

The protein belongs to the TRAFAC class translation factor GTPase superfamily. Classic translation factor GTPase family. EF-G/EF-2 subfamily.

It is found in the cytoplasm. Functionally, catalyzes the GTP-dependent ribosomal translocation step during translation elongation. During this step, the ribosome changes from the pre-translocational (PRE) to the post-translocational (POST) state as the newly formed A-site-bound peptidyl-tRNA and P-site-bound deacylated tRNA move to the P and E sites, respectively. Catalyzes the coordinated movement of the two tRNA molecules, the mRNA and conformational changes in the ribosome. In Corynebacterium glutamicum (strain ATCC 13032 / DSM 20300 / JCM 1318 / BCRC 11384 / CCUG 27702 / LMG 3730 / NBRC 12168 / NCIMB 10025 / NRRL B-2784 / 534), this protein is Elongation factor G.